The chain runs to 217 residues: Ribosomal RNA large subunit methyltransferase E (217 aa).

The S-adenosyl-L-methionine site is built by G64, W66, D92, D108, and D133. K173 acts as the Proton acceptor in catalysis.

This sequence belongs to the class I-like SAM-binding methyltransferase superfamily. RNA methyltransferase RlmE family.

The protein resides in the cytoplasm. The enzyme catalyses uridine(2552) in 23S rRNA + S-adenosyl-L-methionine = 2'-O-methyluridine(2552) in 23S rRNA + S-adenosyl-L-homocysteine + H(+). Specifically methylates the uridine in position 2552 of 23S rRNA at the 2'-O position of the ribose in the fully assembled 50S ribosomal subunit. This Delftia acidovorans (strain DSM 14801 / SPH-1) protein is Ribosomal RNA large subunit methyltransferase E.